We begin with the raw amino-acid sequence, 351 residues long: Beta-1,4-xylosyltransferase IRX9 (351 aa).

The Cytoplasmic portion of the chain corresponds to 1–16 (MGSLERSKKKAQVWKK). The helical; Signal-anchor for type II membrane protein transmembrane segment at 17 to 36 (AVIHFSLCFVMGFFTGFAPA) threads the bilayer. The Lumenal segment spans residues 37 to 351 (GKASFFSNFE…KFPTRTRLST (315 aa)). 2 N-linked (GlcNAc...) asparagine glycosylation sites follow: Asn64 and Asn74. The interval 80 to 107 (SQSQAPAPAESREAEGETRSLSEKEDEN) is disordered. Over residues 89–107 (ESREAEGETRSLSEKEDEN) the composition is skewed to basic and acidic residues. 2 N-linked (GlcNAc...) asparagine glycosylation sites follow: Asn271 and Asn287.

This sequence belongs to the glycosyltransferase 43 family. In terms of tissue distribution, expressed in developing interfascicular fibers, primary and secondary xylem in stems and developing secondary xylem in roots.

Its subcellular location is the golgi apparatus membrane. The catalysed reaction is [(1-&gt;4)-beta-D-xylan](n) + UDP-alpha-D-xylose = [(1-&gt;4)-beta-D-xylan](n+1) + UDP + H(+). Involved in the synthesis of the hemicellulose glucuronoxylan, a major component of secondary cell walls. Xylan xylosyltransferase that acts cooperatively with IRX14 to achieve the successive addition of xylosyl residues during xylan backbone elongation. This Arabidopsis thaliana (Mouse-ear cress) protein is Beta-1,4-xylosyltransferase IRX9.